The chain runs to 55 residues: MSTSRKLKTHGMRRGKNRAPHKGVKRGGSKRKYRKSSLKSRKRGDDASRNYRSHL.

Positions 1-42 (MSTSRKLKTHGMRRGKNRAPHKGVKRGGSKRKYRKSSLKSRK) are enriched in basic residues. The interval 1 to 55 (MSTSRKLKTHGMRRGKNRAPHKGVKRGGSKRKYRKSSLKSRKRGDDASRNYRSHL) is disordered. 3 positions are modified to phosphoserine: S36, S37, and S40.

Belongs to the nuclear transition protein 1 family. As to expression, testis.

The protein localises to the nucleus. The protein resides in the chromosome. In terms of biological role, plays a key role in the replacement of histones to protamine in the elongating spermatids of mammals. In condensing spermatids, loaded onto the nucleosomes, where it promotes the recruitment and processing of protamines, which are responsible for histone eviction. The sequence is that of Spermatid nuclear transition protein 1 (Tnp1) from Rattus norvegicus (Rat).